A 392-amino-acid polypeptide reads, in one-letter code: S-adenosylmethionine synthase (392 aa).

His17 is a binding site for ATP. Asp19 provides a ligand contact to Mg(2+). Glu45 provides a ligand contact to K(+). Residues Glu58 and Gln102 each coordinate L-methionine. The flexible loop stretch occupies residues 102-112 (QSADIAQGVDA). ATP is bound by residues 169–171 (DAK), 235–236 (KF), Asp244, 250–251 (RK), Ala267, and Lys271. Asp244 is a binding site for L-methionine. An L-methionine-binding site is contributed by Lys275.

This sequence belongs to the AdoMet synthase family. As to quaternary structure, homotetramer; dimer of dimers. Mg(2+) serves as cofactor. Requires K(+) as cofactor.

The protein localises to the cytoplasm. The catalysed reaction is L-methionine + ATP + H2O = S-adenosyl-L-methionine + phosphate + diphosphate. Its pathway is amino-acid biosynthesis; S-adenosyl-L-methionine biosynthesis; S-adenosyl-L-methionine from L-methionine: step 1/1. Functionally, catalyzes the formation of S-adenosylmethionine (AdoMet) from methionine and ATP. The overall synthetic reaction is composed of two sequential steps, AdoMet formation and the subsequent tripolyphosphate hydrolysis which occurs prior to release of AdoMet from the enzyme. The polypeptide is S-adenosylmethionine synthase (Methylobacterium sp. (strain 4-46)).